The sequence spans 329 residues: Short-chain dehydrogenase/reductase tropG (329 aa).

Residues Lys-57, Asp-86, Asn-113, Tyr-203, and Lys-207 each contribute to the NADP(+) site. Tyr-203 functions as the Proton acceptor in the catalytic mechanism. Lys-207 (lowers pKa of active site Tyr) is an active-site residue.

The protein belongs to the short-chain dehydrogenases/reductases (SDR) family.

Its pathway is secondary metabolite biosynthesis. Short-chain dehydrogenase/reductase; part of the gene cluster that mediates the biosynthesis of the tropolone class of fungal maleic anhydrides. The pathway begins with the synthesis of 3-methylorcinaldehyde by the non-reducing polyketide synthase (PKS) tropA. 3-methylorcinaldehyde is the substrate for the FAD-dependent monooxygenase tropB to yield a dearomatized hydroxycyclohexadione. The 2-oxoglutarate-dependent dioxygenase tropC then performs the oxidative ring expansion to provide the first tropolone metabolite stipitaldehyde. Trop D converts stipitaldehyde into stipitacetal which is in turn converted to stipitalide by the short-chain dehydrogenase/reductase tropE. The next steps involve tropF, tropG, tropH, tropI and tropJ to form successive tropolone maleic anhydrides including stipitaldehydic, stipitatonic and stipitatic acids. In Talaromyces stipitatus (strain ATCC 10500 / CBS 375.48 / QM 6759 / NRRL 1006) (Penicillium stipitatum), this protein is Short-chain dehydrogenase/reductase tropG.